Here is a 566-residue protein sequence, read N- to C-terminus: MKQSMVFSPTLREVPADAEIKSHQLLLRAGFMRQNASGIYSFLPFGLKVLHKVERIVREEMERAGAVELLMPAMQAAELWQESGRWYSYGSELMRMKDRNAREFALGATHEEVITDLVRDEVKSYKKLPLTLYQIQTKFRDEQRPRFGLLRGREFLMKDAYSFHATQESLDEVYDRLYKAYSNIFARCGLNFRAVIADSGAMGGKDTHEFMVLSDVGEDTIAYSDTSDYAANIEMAPVVATYTKSDEAEKALEKVATPDQKAIEEVSAFLNIAADKCIKSMVFKVDEKLVVVLVRGDHEVNDVKVKNVYGASVVELASHEEVKALLNCEVGSLGPINVTGDIEIIADHAVASIVNGCSGANEEGFHYVNVNPERDFKVSQYTDLRFIQEGDQSPDGNGTILFARGIEVGHVFKLGTRYSEAMNATFLDENGKTQPLIMGCYGIGVSRTVAAIAEQFNDENGLVWPKAVAPFHVHVIPVNMKSDAQREMGENIYNSLQEQGYEVLLDDRAERAGVKFADADLFGLPVRVTVGKKADEGIVEVKVRATGESEEVNVEELQTYIANILK.

It belongs to the class-II aminoacyl-tRNA synthetase family. ProS type 1 subfamily. Homodimer.

Its subcellular location is the cytoplasm. It catalyses the reaction tRNA(Pro) + L-proline + ATP = L-prolyl-tRNA(Pro) + AMP + diphosphate. Its function is as follows. Catalyzes the attachment of proline to tRNA(Pro) in a two-step reaction: proline is first activated by ATP to form Pro-AMP and then transferred to the acceptor end of tRNA(Pro). As ProRS can inadvertently accommodate and process non-cognate amino acids such as alanine and cysteine, to avoid such errors it has two additional distinct editing activities against alanine. One activity is designated as 'pretransfer' editing and involves the tRNA(Pro)-independent hydrolysis of activated Ala-AMP. The other activity is designated 'posttransfer' editing and involves deacylation of mischarged Ala-tRNA(Pro). The misacylated Cys-tRNA(Pro) is not edited by ProRS. The polypeptide is Proline--tRNA ligase (Bacillus cereus (strain B4264)).